Reading from the N-terminus, the 732-residue chain is 1,4-alpha-glucan branching enzyme GlgB 1 (732 aa).

The active-site Nucleophile is the D411. E464 (proton donor) is an active-site residue.

Belongs to the glycosyl hydrolase 13 family. GlgB subfamily. In terms of assembly, monomer.

It catalyses the reaction Transfers a segment of a (1-&gt;4)-alpha-D-glucan chain to a primary hydroxy group in a similar glucan chain.. Its pathway is glycan biosynthesis; glycogen biosynthesis. Functionally, catalyzes the formation of the alpha-1,6-glucosidic linkages in glycogen by scission of a 1,4-alpha-linked oligosaccharide from growing alpha-1,4-glucan chains and the subsequent attachment of the oligosaccharide to the alpha-1,6 position. This chain is 1,4-alpha-glucan branching enzyme GlgB 1, found in Xanthomonas euvesicatoria pv. vesicatoria (strain 85-10) (Xanthomonas campestris pv. vesicatoria).